The chain runs to 463 residues: Heterogeneous nuclear ribonucleoprotein K (463 aa).

At Met-1 the chain carries N-acetylmethionine. The disordered stretch occupies residues 1 to 37; it reads METEQPEETFPNTETNGEFGKRPAEDMEEEQAFKRSR. A necessary for interaction with DDX1 region spans residues 1–276; sequence METEQPEETF…GRGGRPMPPS (276 aa). Residues 19–37 show a composition bias toward basic and acidic residues; sequence FGKRPAEDMEEEQAFKRSR. Position 34 is an N6-acetyllysine; alternate (Lys-34). Residue Lys-34 forms a Glycyl lysine isopeptide (Lys-Gly) (interchain with G-Cter in SUMO1); alternate linkage. A Glycyl lysine isopeptide (Lys-Gly) (interchain with G-Cter in SUMO2); alternate cross-link involves residue Lys-34. Ser-36 is modified (phosphoserine). Thr-39 is subject to Phosphothreonine. Positions 42 to 104 constitute a KH 1 domain; it reads MVELRILLQS…ETIGEILKKI (63 aa). Glycyl lysine isopeptide (Lys-Gly) (interchain with G-Cter in SUMO2) cross-links involve residues Lys-52 and Lys-60. 2 tandem repeats follow at residues 54–76 and 59–62. The tract at residues 54-421 is 2 X 22 AA approximate repeats; the sequence is AGAVIGKGGK…QIRHESGASI (368 aa). The interval 59–407 is 5 X 4 AA repeats of G-X-G-G; the sequence is GKGGKNIKAL…LAGSIIGKGG (349 aa). Phosphoserine occurs at positions 75 and 116. The KH 2 domain occupies 144 to 209; that stretch reads DCELRLLIHQ…DRVVECIKII (66 aa). A Glycyl lysine isopeptide (Lys-Gly) (interchain with G-Cter in SUMO1); alternate cross-link involves residue Lys-163. Residue Lys-163 forms a Glycyl lysine isopeptide (Lys-Gly) (interchain with G-Cter in SUMO2); alternate linkage. Lys-198 bears the N6-acetyllysine mark. The interval 209–337 is interaction with ZIK1; the sequence is ILDLISESPI…RPGDRYDGMV (129 aa). Phosphoserine occurs at positions 214 and 216. Residue Lys-219 forms a Glycyl lysine isopeptide (Lys-Gly) (interchain with G-Cter in SUMO2); alternate linkage. At Lys-219 the chain carries N6-succinyllysine; alternate. The interval 236–273 is RNA-binding RGG-box; sequence YGGFTMMFDDRRGRPVGFPMRGRGGFDRMPPGRGGRPM. Tandem repeats lie at residues 245-250, 257-260, and 267-270. The interval 245 to 329 is 2 X 6 AA repeats of D-R-R-G-R-P; sequence DRRGRPVGFP…LMAYDRRGRP (85 aa). The tract at residues 250–329 is disordered; the sequence is PVGFPMRGRG…LMAYDRRGRP (80 aa). Over residues 252–266 the composition is skewed to low complexity; the sequence is GFPMRGRGGFDRMPP. Residues 276-285 are compositionally biased toward basic and acidic residues; that stretch reads SRRDYDDMSP. Ser-284 is modified (phosphoserine). Residues 295 to 298 form a 3-4 repeat; sequence GRGG. Position 316 is an omega-N-methylarginine (Arg-316). One copy of the 2-2 repeat lies at 324–329; sequence DRRGRP. Arg-377 bears the Omega-N-methylarginine mark. Phosphoserine is present on Ser-379. The residue at position 380 (Tyr-380) is a Phosphotyrosine. The KH 3 domain occupies 387–451; it reads IITTQVTIPK…DQIQNAQYLL (65 aa). 2 consecutive repeat copies span residues 399-421 and 404-407. N6-acetyllysine; alternate is present on Lys-405. Residue Lys-405 forms a Glycyl lysine isopeptide (Lys-Gly) (interchain with G-Cter in SUMO2); alternate linkage. Ser-420 bears the Phosphoserine mark. Lys-422 participates in a covalent cross-link: Glycyl lysine isopeptide (Lys-Gly) (interchain with G-Cter in SUMO1); alternate. Lys-422 participates in a covalent cross-link: Glycyl lysine isopeptide (Lys-Gly) (interchain with G-Cter in SUMO2); alternate. Lys-422 is covalently cross-linked (Glycyl lysine isopeptide (Lys-Gly) (interchain with G-Cter in SUMO); alternate).

In terms of assembly, identified in the spliceosome C complex. Interacts with ANKRD28, RBM42 and ZIK1. Interacts with DDX1. Interacts with MDM2; this interaction leads to ubiquitination and proteasomal degradation. Interacts with p53/TP53. Interacts with BRDT. Interacts with IVNS1ABP. Interacts with PPIA/CYPA. Part of a transcription inhibitory ribonucleoprotein complex composed at least of the circular RNA circZNF827, ZNF827 and HNRNPL. Sumoylated by CBX4. Sumoylation is increased upon DNA damage, such as that produced by doxorubicin, etoposide, UV light and camptothecin, due to enhanced CBX4 phosphorylation by HIPK2 under these conditions. Post-translationally, ubiquitinated by MDM2. Doxorubicin treatment does not affect monoubiquitination, but slightly decreases HNRNPK poly-ubiquitination. In terms of processing, O-glycosylated (O-GlcNAcylated), in a cell cycle-dependent manner.

It localises to the cytoplasm. Its subcellular location is the nucleus. The protein localises to the nucleoplasm. It is found in the cell projection. The protein resides in the podosome. Functionally, one of the major pre-mRNA-binding proteins. Binds tenaciously to poly(C) sequences. Likely to play a role in the nuclear metabolism of hnRNAs, particularly for pre-mRNAs that contain cytidine-rich sequences. Can also bind poly(C) single-stranded DNA. Plays an important role in p53/TP53 response to DNA damage, acting at the level of both transcription activation and repression. When sumoylated, acts as a transcriptional coactivator of p53/TP53, playing a role in p21/CDKN1A and 14-3-3 sigma/SFN induction. As far as transcription repression is concerned, acts by interacting with long intergenic RNA p21 (lincRNA-p21), a non-coding RNA induced by p53/TP53. This interaction is necessary for the induction of apoptosis, but not cell cycle arrest. As part of a ribonucleoprotein complex composed at least of ZNF827, HNRNPL and the circular RNA circZNF827 that nucleates the complex on chromatin, may negatively regulate the transcription of genes involved in neuronal differentiation. The protein is Heterogeneous nuclear ribonucleoprotein K (HNRNPK) of Oryctolagus cuniculus (Rabbit).